The sequence spans 1184 residues: Nucleolar protein 6 (1184 aa).

Basic and acidic residues predominate over residues 1–10; it reads MGRIKEKESK. Disordered regions lie at residues 1-42 and 1133-1184; these read MGRI…NRVP and REQR…NALC.

Belongs to the NRAP family. In terms of assembly, part of the small subunit (SSU) processome, composed of more than 70 proteins and the RNA chaperone small nucleolar RNA (snoRNA) U3.

It is found in the nucleus. The protein resides in the nucleolus. Its subcellular location is the chromosome. Part of the small subunit (SSU) processome, first precursor of the small eukaryotic ribosomal subunit. During the assembly of the SSU processome in the nucleolus, many ribosome biogenesis factors, an RNA chaperone and ribosomal proteins associate with the nascent pre-rRNA and work in concert to generate RNA folding, modifications, rearrangements and cleavage as well as targeted degradation of pre-ribosomal RNA by the RNA exosome. In Drosophila virilis (Fruit fly), this protein is Nucleolar protein 6.